A 277-amino-acid chain; its full sequence is MSGAAFSRQRGQLLSDTLAAAKAEGRSALIAYLPAGFPTVDGGIAAIKAVFDGGADVVEVGLPHSDPVLDGPVIQTADDIALRGGVRIADVMRTVREAHEATGKPVLVMTYWNPIDRYGVERFTAELAEAGGAGCILPDLPVQESALWREHAEKHGLATVFVVAPSSKDARLAEITAAGSGFVYAASLMGVTGTRASVGEQAQDLVRRTRATTDLPVCVGLGVSNATQAAEVAGFADGVIVGSAFVKLMLDAEDEAAGLEAVRALAGELAKGVRGGD.

Residues Glu-59 and Asp-70 each act as proton acceptor in the active site.

Belongs to the TrpA family. In terms of assembly, tetramer of two alpha and two beta chains.

It catalyses the reaction (1S,2R)-1-C-(indol-3-yl)glycerol 3-phosphate + L-serine = D-glyceraldehyde 3-phosphate + L-tryptophan + H2O. The protein operates within amino-acid biosynthesis; L-tryptophan biosynthesis; L-tryptophan from chorismate: step 5/5. Its function is as follows. The alpha subunit is responsible for the aldol cleavage of indoleglycerol phosphate to indole and glyceraldehyde 3-phosphate. This chain is Tryptophan synthase alpha chain, found in Streptomyces avermitilis (strain ATCC 31267 / DSM 46492 / JCM 5070 / NBRC 14893 / NCIMB 12804 / NRRL 8165 / MA-4680).